Reading from the N-terminus, the 129-residue chain is uncharacterized protein (129 aa).

It localises to the cytoplasm. The protein resides in the cytosol. The protein localises to the nucleus. This is an uncharacterized protein from Schizosaccharomyces pombe (strain 972 / ATCC 24843) (Fission yeast).